The following is a 775-amino-acid chain: MIARPARDVLSSATKKQFRFRGCLAARHEPYHTSTSRAGQVAILPATTDDKTLVSVFDSPRSNAKLSAFATTGLFNHSTVTHPRALNSIAQGTLIRAHVLTNRILRAKESREELFKVVKNLDRLSDMLCSVIDLCELVRNSHPDRAWVEAANDAYEGLCQTMNELNTHVGLYDVLKIVLSDPEIVKSLSPEAYRTAMIFWNDFEKSAINLPAKEREEFVALSSEIISLGRMFLEETTAARPPAKIPPSDLAGLKDKGMGVRLQLQAQFTQRDLHVYPGSLQAQMIMRSAPAEEARRRVYIASHSSTPEQIELLERMLSTRARLARLVGRESFAAMALDDKMAKNPTNVARFLDSLMDRSRPYARRALRNLSMRKQEHLHTPPFPTIQAWDRDYYCPPEPPAPPIPLPRLTFGTVLMGLSRLFRHLYGIHLRPVKPIAGEVWHSDVHKLEVVDEERGVIGLIYADVFARRGKASGAAHYTVRCSRRTDDDDVQGDNDELTRMYPDLIKQSEEFEAVGRGPIPGLPGTYQQPLVVLLCEFARPSLGAAVLEWHEVMTLFHEMGHAMHSMIGRTEYQNVSGTRCPTDFVELPSILMEHFLNSRQVLSLFHADSTSSSSQPIGNHDEDPCHSIDTYAQIMLAALDQIYHSPAALQPGFDSTRKLARLHDEKGLIPYVPGTSFQTQFGHLFGYGATYYSYLFDRAIASRVWKDVFSSSPLSRETGERYKQEVLRYGGGKDPWEMVSALLKAPELASGDAEAMATVGRWKIEDEVGLPGRH.

The N-terminal 28 residues, 1–28 (MIARPARDVLSSATKKQFRFRGCLAARH), are a transit peptide targeting the mitochondrion. Position 558 (His558) interacts with Zn(2+). Residue Glu559 is part of the active site. Positions 562 and 565 each coordinate Zn(2+).

Belongs to the peptidase M3 family. It depends on Zn(2+) as a cofactor.

The protein localises to the mitochondrion matrix. It carries out the reaction Release of an N-terminal octapeptide as second stage of processing of some proteins imported into the mitochondrion.. Functionally, cleaves proteins, imported into the mitochondrion, to their mature size. While most mitochondrial precursor proteins are processed to the mature form in one step by mitochondrial processing peptidase (MPP), the sequential cleavage by MIP of an octapeptide after initial processing by MPP is a required step for a subgroup of nuclear-encoded precursor proteins destined for the matrix or the inner membrane. This is Mitochondrial intermediate peptidase (OCT1) from Schizophyllum commune (Split gill fungus).